The sequence spans 706 residues: MVSATNTVNSGVPPNPAASIQAERAASKFDPKEMHYFLEGGEERAEKFKQMMQQMERDPILSANFQYYDLTKDQQRELTALRIDRLTRYIENESFDDFNKRMSLMGVFDPQLSTRLGINLGLFVSCLKGNGTAEQVKYWAMDKSAVYMRGIYGCFGMTELAHGSNVAGLETTATFDDENDEFIINTPHIGATKWWIGGAAHSATHCSVYARLIVGGQDYGVKTFVVPLRDSNHDTMPGVTVGDIGAKMGRDGIDNGWIQFSNVRIPRYFMLQKFCKVSSEGDVQLPPLEQLSYSALLGGRVMMVLDSFRVSARFSTVALRYAIGRRQFKAGSASDDKNALECQLLDYPLHQRRLLPYLALSYIISASAVKIETTIESTLENLDKAVEADDMGAIMKSIDSMKSLFVDSGSLKSTCTWLAAEVIDQCRQACGGHGYSAYSGFGKAYNDWVVMCTWEGDNNVLAMSVGKQIIKHILGVLDGKKVKGSADFLNNTEQYLNEEPVLRSVDDLKDLKKVLLAIEVAIIRVAYQASQTLKENKGDFDTVGAEMVTLSKLNAHHFMLSEFLDRMDSFESKQLVPYLESVAKLYSATIVLEKFAGDFLAQGVFPPKLNGELNSKHIPELCKEIRPNVIALTDSFQQSDMMINSAIGSYDGNIYENYFGVVKANNPPSKTKAPYSGALEAMLNRPSKEERERFEKSTETAKILSK.

Residues 682-706 (MLNRPSKEERERFEKSTETAKILSK) are disordered. Over residues 686-699 (PSKEERERFEKSTE) the composition is skewed to basic and acidic residues.

Belongs to the acyl-CoA oxidase family. FAD serves as cofactor.

It is found in the peroxisome. It catalyses the reaction a 2,3-saturated acyl-CoA + O2 = a (2E)-enoyl-CoA + H2O2. The protein operates within lipid metabolism; peroxisomal fatty acid beta-oxidation. The protein is Acyl-coenzyme A oxidase (POX1) of Debaryomyces hansenii (strain ATCC 36239 / CBS 767 / BCRC 21394 / JCM 1990 / NBRC 0083 / IGC 2968) (Yeast).